The following is a 166-amino-acid chain: Putative methyltransferase Rv1506c (166 aa).

It belongs to the methyltransferase superfamily.

In terms of biological role, probably plays a role in host phagosome maturation arrest, as well as a role in the synthesis of acyltrehalose-containing glycolipids. The polypeptide is Putative methyltransferase Rv1506c (Mycobacterium tuberculosis (strain ATCC 25618 / H37Rv)).